The sequence spans 223 residues: DNA mismatch repair protein MutH (223 aa).

Belongs to the MutH family.

It localises to the cytoplasm. In terms of biological role, sequence-specific endonuclease that cleaves unmethylated GATC sequences. It is involved in DNA mismatch repair. This chain is DNA mismatch repair protein MutH, found in Shewanella sp. (strain W3-18-1).